An 807-amino-acid chain; its full sequence is AP-5 complex subunit zeta-1 (807 aa).

In terms of assembly, probably part of the adaptor protein complex 5 (AP-5) a tetramer composed of AP5B1, AP5M1, AP5S1 and AP5Z1. Interacts with ZFYVE26 and SPG11.

The protein localises to the cytoplasm. The protein resides in the nucleus. Its function is as follows. As part of AP-5, a probable fifth adaptor protein complex it may be involved in endosomal transport. In Mus musculus (Mouse), this protein is AP-5 complex subunit zeta-1 (Ap5z1).